The primary structure comprises 122 residues: Large ribosomal subunit protein uL14 (122 aa).

Belongs to the universal ribosomal protein uL14 family. In terms of assembly, part of the 50S ribosomal subunit. Forms a cluster with proteins L3 and L19. In the 70S ribosome, L14 and L19 interact and together make contacts with the 16S rRNA in bridges B5 and B8.

Its function is as follows. Binds to 23S rRNA. Forms part of two intersubunit bridges in the 70S ribosome. The protein is Large ribosomal subunit protein uL14 of Leifsonia xyli subsp. xyli (strain CTCB07).